The chain runs to 134 residues: ATP synthase epsilon chain (134 aa).

The protein belongs to the ATPase epsilon chain family. In terms of assembly, F-type ATPases have 2 components, CF(1) - the catalytic core - and CF(0) - the membrane proton channel. CF(1) has five subunits: alpha(3), beta(3), gamma(1), delta(1), epsilon(1). CF(0) has three main subunits: a, b and c.

It is found in the cell inner membrane. In terms of biological role, produces ATP from ADP in the presence of a proton gradient across the membrane. In Rhodospirillum rubrum (strain ATCC 11170 / ATH 1.1.1 / DSM 467 / LMG 4362 / NCIMB 8255 / S1), this protein is ATP synthase epsilon chain.